Consider the following 1372-residue polypeptide: Capping protein, Arp2/3 and myosin-I linker protein 3 (1372 aa).

The segment at 126 to 151 is disordered; sequence RGNADTPEGPRDTSPNSETSTSTTHS. Residues 138-151 are compositionally biased toward low complexity; the sequence is TSPNSETSTSTTHS. 10 LRR repeats span residues 244-264, 274-295, 303-323, 335-357, 365-385, 392-413, 424-444, 455-475, 482-501, and 509-530; these read SLEE…QKLA, VLHA…SLSQ, GLTK…QALG, SLRY…NALY, ALVH…LGAL, HLTY…EAPP, TLSH…RALL, DLHL…ALQE, CVGS…LTLV, and SLKH…EEIL. 3 disordered regions span residues 865–900, 970–1003, and 1024–1372; these read TLSD…ELGT, KLRH…RQEN, and ESSS…PGTD. Residues 982-995 show a composition bias toward pro residues; sequence PRTTPPGPGRPSMP. The segment at 1040–1073 is necessary for localization at the cell membrane; that stretch reads SEAPLPPLQKKRRRGLFHFRRPRSFKGDRGPGSP. Over residues 1048–1063 the composition is skewed to basic residues; sequence QKKRRRGLFHFRRPRS. Positions 1079–1098 are enriched in pro residues; that stretch reads LPPPPPPPPTQESPPSPDPP. Positions 1099-1109 are enriched in low complexity; the sequence is SLGNNSSPCWS. Composition is skewed to basic and acidic residues over residues 1163–1177 and 1219–1229; these read ERAK…REGP and RRAEATWHIAE. Positions 1233-1244 are enriched in polar residues; the sequence is PNHSCQSPSPAS. The span at 1348–1361 shows a compositional bias: basic and acidic residues; sequence QSCDKLEPDRRRPP.

Belongs to the CARMIL family. In terms of tissue distribution, widely expressed, with much higher levels in fetal tissues than in adult ones. Up-regulated in certain cancer tissues.

The protein localises to the cytoplasm. The protein resides in the cell membrane. This is Capping protein, Arp2/3 and myosin-I linker protein 3 from Homo sapiens (Human).